Reading from the N-terminus, the 443-residue chain is Xaa-Pro dipeptidase (443 aa).

Mn(2+) is bound by residues Asp246, Asp257, His339, Glu384, and Glu423.

This sequence belongs to the peptidase M24B family. Bacterial-type prolidase subfamily. It depends on Mn(2+) as a cofactor.

It carries out the reaction Xaa-L-Pro dipeptide + H2O = an L-alpha-amino acid + L-proline. In terms of biological role, splits dipeptides with a prolyl residue in the C-terminal position. This is Xaa-Pro dipeptidase from Salmonella choleraesuis (strain SC-B67).